Reading from the N-terminus, the 232-residue chain is Large ribosomal subunit protein uL1 (232 aa).

The protein belongs to the universal ribosomal protein uL1 family. Part of the 50S ribosomal subunit.

In terms of biological role, binds directly to 23S rRNA. The L1 stalk is quite mobile in the ribosome, and is involved in E site tRNA release. Protein L1 is also a translational repressor protein, it controls the translation of the L11 operon by binding to its mRNA. This Bartonella bacilliformis (strain ATCC 35685 / KC583 / Herrer 020/F12,63) protein is Large ribosomal subunit protein uL1.